We begin with the raw amino-acid sequence, 162 residues long: Interleukin-15 (162 aa).

The first 29 residues, 1–29, serve as a signal peptide directing secretion; it reads MRISKPSLRSTSIQCYLCFLLNSHLITEA. Positions 30–48 are excised as a propeptide; that stretch reads GIHVFVWGCISAGLPKTEA. 2 disulfides stabilise this stretch: Cys83/Cys133 and Cys90/Cys136. N-linked (GlcNAc...) asparagine glycans are attached at residues Asn119 and Asn127.

Belongs to the IL-15/IL-21 family.

The protein resides in the secreted. Its function is as follows. Cytokine that plays a major role in the development of inflammatory and protective immune responses to microbial invaders and parasites by modulating immune cells of both the innate and adaptive immune systems. Stimulates the proliferation of natural killer cells, T-cells and B-cells and promotes the secretion of several cytokines. In monocytes, induces the production of IL8 and monocyte chemotactic protein 1/CCL2, two chemokines that attract neutrophils and monocytes respectively to sites of infection. Unlike most cytokines, which are secreted in soluble form, IL15 is expressed in association with its high affinity IL15RA on the surface of IL15-producing cells and delivers signals to target cells that express IL2RB and IL2RG receptor subunits. Binding to its receptor triggers the phosphorylation of JAK1 and JAK3 and the recruitment and subsequent phosphorylation of signal transducer and activator of transcription-3/STAT3 and STAT5. In mast cells, induces the rapid tyrosine phosphorylation of STAT6 and thereby controls mast cell survival and release of cytokines such as IL4. In Cavia porcellus (Guinea pig), this protein is Interleukin-15 (IL15).